We begin with the raw amino-acid sequence, 223 residues long: MOB kinase activator-like 4 (223 aa).

Positions 1–21 (MKMADGSTILRRNRPGTKSKD) are disordered. Zn(2+) contacts are provided by Cys-92, Cys-97, His-169, and His-174.

Belongs to the MOB1/phocein family.

This Drosophila melanogaster (Fruit fly) protein is MOB kinase activator-like 4 (Mob4).